Reading from the N-terminus, the 20-residue chain is L-amino-acid oxidase L1 (20 aa).

It belongs to the flavin monoamine oxidase family. FIG1 subfamily. In terms of assembly, monomer. This is in contrast with most of its orthologs, that are non-covalently linked homodimers. FAD serves as cofactor. In terms of processing, N-glycosylated. Expressed by the venom gland.

It is found in the secreted. The catalysed reaction is an L-alpha-amino acid + O2 + H2O = a 2-oxocarboxylate + H2O2 + NH4(+). It carries out the reaction L-leucine + O2 + H2O = 4-methyl-2-oxopentanoate + H2O2 + NH4(+). It catalyses the reaction L-phenylalanine + O2 + H2O = 3-phenylpyruvate + H2O2 + NH4(+). The enzyme catalyses L-tryptophan + O2 + H2O = indole-3-pyruvate + H2O2 + NH4(+). The catalysed reaction is L-methionine + O2 + H2O = 4-methylsulfanyl-2-oxobutanoate + H2O2 + NH4(+). It carries out the reaction L-isoleucine + O2 + H2O = (S)-3-methyl-2-oxopentanoate + H2O2 + NH4(+). It catalyses the reaction L-tyrosine + O2 + H2O = 3-(4-hydroxyphenyl)pyruvate + H2O2 + NH4(+). Catalyzes an oxidative deamination of predominantly hydrophobic and aromatic L-amino acids, thus producing hydrogen peroxide that may contribute to the diverse toxic effects of this enzyme. Is active on L-Met, L-Ile, L-Leu, L-Phe, L-Trp, and L-Tyr. Exhibits diverse biological activities, such as hemorrhage, hemolysis, edema, apoptosis of vascular endothelial cells or tumor cell lines, antibacterial and antiparasitic activities, as well as regulation of platelet aggregation. Its effect on platelets is controversial, since it either induces aggregation or inhibits agonist-induced aggregation. These different effects are probably due to different experimental conditions. This chain is L-amino-acid oxidase L1, found in Daboia russelii (Russel's viper).